Reading from the N-terminus, the 213-residue chain is NADH-quinone oxidoreductase subunit I (213 aa).

4Fe-4S ferredoxin-type domains are found at residues 74-103 (RFIE…METS) and 113-142 (GNYS…HGIE). [4Fe-4S] cluster is bound by residues Cys83, Cys86, Cys89, Cys93, Cys122, Cys125, Cys128, and Cys132.

This sequence belongs to the complex I 23 kDa subunit family. As to quaternary structure, NDH-1 is composed of 14 different subunits. Subunits NuoA, H, J, K, L, M, N constitute the membrane sector of the complex. [4Fe-4S] cluster is required as a cofactor.

The protein localises to the cell inner membrane. It carries out the reaction a quinone + NADH + 5 H(+)(in) = a quinol + NAD(+) + 4 H(+)(out). NDH-1 shuttles electrons from NADH, via FMN and iron-sulfur (Fe-S) centers, to quinones in the respiratory chain. The immediate electron acceptor for the enzyme in this species is believed to be ubiquinone. Couples the redox reaction to proton translocation (for every two electrons transferred, four hydrogen ions are translocated across the cytoplasmic membrane), and thus conserves the redox energy in a proton gradient. This chain is NADH-quinone oxidoreductase subunit I, found in Campylobacter jejuni subsp. doylei (strain ATCC BAA-1458 / RM4099 / 269.97).